A 355-amino-acid polypeptide reads, in one-letter code: Probable protein phosphatase 2C 21 (355 aa).

Residues 23–329 form the PPM-type phosphatase domain; it reads RFGLSSMQGW…DNMTIILVQF (307 aa). Positions 57, 58, 272, and 320 each coordinate Mn(2+). The tract at residues 329–355 is disordered; sequence FKKPNPSETEPEDSKPEPSEDEPSSSS.

It belongs to the PP2C family. Mg(2+) serves as cofactor. Requires Mn(2+) as cofactor.

It catalyses the reaction O-phospho-L-seryl-[protein] + H2O = L-seryl-[protein] + phosphate. The enzyme catalyses O-phospho-L-threonyl-[protein] + H2O = L-threonyl-[protein] + phosphate. This is Probable protein phosphatase 2C 21 (PPC4-2) from Arabidopsis thaliana (Mouse-ear cress).